Reading from the N-terminus, the 598-residue chain is Elongation factor 4 (598 aa).

One can recognise a tr-type G domain in the interval 2-184 (NNIRNFAIIA…AIVAKLPAPQ (183 aa)). Residues 14 to 19 (DHGKST) and 131 to 134 (NKVD) contribute to the GTP site.

This sequence belongs to the TRAFAC class translation factor GTPase superfamily. Classic translation factor GTPase family. LepA subfamily.

The protein localises to the cell membrane. The enzyme catalyses GTP + H2O = GDP + phosphate + H(+). Required for accurate and efficient protein synthesis under certain stress conditions. May act as a fidelity factor of the translation reaction, by catalyzing a one-codon backward translocation of tRNAs on improperly translocated ribosomes. Back-translocation proceeds from a post-translocation (POST) complex to a pre-translocation (PRE) complex, thus giving elongation factor G a second chance to translocate the tRNAs correctly. Binds to ribosomes in a GTP-dependent manner. This Wolbachia sp. subsp. Drosophila simulans (strain wRi) protein is Elongation factor 4.